Consider the following 325-residue polypeptide: Succinylglutamate desuccinylase (325 aa).

Zn(2+) contacts are provided by histidine 51, glutamate 54, and histidine 148. Glutamate 211 is an active-site residue.

The protein belongs to the AspA/AstE family. Succinylglutamate desuccinylase subfamily. Requires Zn(2+) as cofactor.

It catalyses the reaction N-succinyl-L-glutamate + H2O = L-glutamate + succinate. It participates in amino-acid degradation; L-arginine degradation via AST pathway; L-glutamate and succinate from L-arginine: step 5/5. In terms of biological role, transforms N(2)-succinylglutamate into succinate and glutamate. The polypeptide is Succinylglutamate desuccinylase (Photorhabdus laumondii subsp. laumondii (strain DSM 15139 / CIP 105565 / TT01) (Photorhabdus luminescens subsp. laumondii)).